The sequence spans 440 residues: 3-phosphoshikimate 1-carboxyvinyltransferase (440 aa).

3-phosphoshikimate contacts are provided by lysine 26, serine 27, and arginine 31. Lysine 26 provides a ligand contact to phosphoenolpyruvate. Residues glycine 99 and arginine 127 each contribute to the phosphoenolpyruvate site. The 3-phosphoshikimate site is built by serine 172, glutamine 174, aspartate 320, and lysine 347. Glutamine 174 is a binding site for phosphoenolpyruvate. Aspartate 320 serves as the catalytic Proton acceptor. Phosphoenolpyruvate contacts are provided by arginine 351 and arginine 392.

It belongs to the EPSP synthase family. As to quaternary structure, monomer.

The protein localises to the cytoplasm. It carries out the reaction 3-phosphoshikimate + phosphoenolpyruvate = 5-O-(1-carboxyvinyl)-3-phosphoshikimate + phosphate. Its pathway is metabolic intermediate biosynthesis; chorismate biosynthesis; chorismate from D-erythrose 4-phosphate and phosphoenolpyruvate: step 6/7. Functionally, catalyzes the transfer of the enolpyruvyl moiety of phosphoenolpyruvate (PEP) to the 5-hydroxyl of shikimate-3-phosphate (S3P) to produce enolpyruvyl shikimate-3-phosphate and inorganic phosphate. The sequence is that of 3-phosphoshikimate 1-carboxyvinyltransferase from Xanthomonas oryzae pv. oryzae (strain MAFF 311018).